The chain runs to 91 residues: Small ribosomal subunit protein bS16c (91 aa).

Belongs to the bacterial ribosomal protein bS16 family.

The protein localises to the plastid. It is found in the chloroplast. The polypeptide is Small ribosomal subunit protein bS16c (Pelargonium hortorum (Common geranium)).